The chain runs to 276 residues: Undecaprenyl-diphosphatase (276 aa).

6 consecutive transmembrane segments (helical) span residues 43 to 63 (RAMA…VWEF), 85 to 105 (ANLL…ADLI), 109 to 129 (LFNP…MLWA), 183 to 203 (AATE…AVYS), 214 to 234 (SDLP…MIAV), and 249 to 269 (FAWY…FGWV).

This sequence belongs to the UppP family.

The protein localises to the cell inner membrane. The catalysed reaction is di-trans,octa-cis-undecaprenyl diphosphate + H2O = di-trans,octa-cis-undecaprenyl phosphate + phosphate + H(+). Functionally, catalyzes the dephosphorylation of undecaprenyl diphosphate (UPP). Confers resistance to bacitracin. The chain is Undecaprenyl-diphosphatase from Pseudomonas putida (strain W619).